The following is a 201-amino-acid chain: Probable nicotinate-nucleotide adenylyltransferase (201 aa).

It belongs to the NadD family.

It carries out the reaction nicotinate beta-D-ribonucleotide + ATP + H(+) = deamido-NAD(+) + diphosphate. It functions in the pathway cofactor biosynthesis; NAD(+) biosynthesis; deamido-NAD(+) from nicotinate D-ribonucleotide: step 1/1. Functionally, catalyzes the reversible adenylation of nicotinate mononucleotide (NaMN) to nicotinic acid adenine dinucleotide (NaAD). The protein is Probable nicotinate-nucleotide adenylyltransferase of Clostridium botulinum (strain Loch Maree / Type A3).